The primary structure comprises 642 residues: Pentatricopeptide repeat-containing protein At3g16010 (642 aa).

PPR repeat units lie at residues 125-159 (DCSTYMTLIRCLEEARLYGEMYRTIQEVVRNTYVS), 161-195 (SPAVLSELVKALGRAKMVSKALSVFYQAKGRKCKP), 196-230 (TSSTYNSVILMLMQEGQHEKVHEVYTEMCNEGDCF), 232-266 (DTITYSALISSYEKLGRNDSAIRLFDEMKDNCMQP), 267-301 (TEKIYTTLLGIYFKVGKVEKALDLFEEMKRAGCSP), 302-336 (TVYTYTELIKGLGKAGRVDEAYGFYKDMLRDGLTP), 337-371 (DVVFLNNLMNILGKVGRVEELTNVFSEMGMWRCTP), 372-407 (TVVSYNTVIKALFESKAHVSEVSSWFDKMKADSVSP), 408-442 (SEFTYSILIDGYCKTNRVEKALLLLEEMDEKGFPP), 443-473 (CPAAYCSLINALGKAKRYEAANELFKELKEN), 478-512 (SSRVYAVMIKHFGKCGKLSEAVDLFNEMKNQGSGP), 513-547 (DVYAYNALMSGMVKAGMINEANSLLRKMEENGCRA), 548-582 (DINSHNIILNGFARTGVPRRAIEMFETIKHSGIKP), and 583-617 (DGVTYNTLLGCFAHAGMFEEAARMMREMKDKGFEY).

It belongs to the PPR family. P subfamily.

This is Pentatricopeptide repeat-containing protein At3g16010 from Arabidopsis thaliana (Mouse-ear cress).